The sequence spans 380 residues: Erythronate-4-phosphate dehydrogenase (380 aa).

2 residues coordinate substrate: Ser45 and Thr66. NAD(+) contacts are provided by residues 126 to 127 (QV), Asp146, Thr174, 205 to 207 (ASR), and Asp231. Arg207 is an active-site residue. The active site involves Glu236. The active-site Proton donor is His253. Residue Gly256 coordinates NAD(+). A substrate-binding site is contributed by Tyr257.

Belongs to the D-isomer specific 2-hydroxyacid dehydrogenase family. PdxB subfamily. Homodimer.

Its subcellular location is the cytoplasm. The enzyme catalyses 4-phospho-D-erythronate + NAD(+) = (R)-3-hydroxy-2-oxo-4-phosphooxybutanoate + NADH + H(+). The protein operates within cofactor biosynthesis; pyridoxine 5'-phosphate biosynthesis; pyridoxine 5'-phosphate from D-erythrose 4-phosphate: step 2/5. Catalyzes the oxidation of erythronate-4-phosphate to 3-hydroxy-2-oxo-4-phosphonooxybutanoate. This Pseudomonas syringae pv. syringae (strain B728a) protein is Erythronate-4-phosphate dehydrogenase.